Reading from the N-terminus, the 202-residue chain is Ribonuclease HII (202 aa).

The RNase H type-2 domain occupies 18-202 (TYICGVDEAG…FAPVAKLLKQ (185 aa)). Residues Asp24, Glu25, and Asp116 each coordinate a divalent metal cation.

The protein belongs to the RNase HII family. It depends on Mn(2+) as a cofactor. Mg(2+) serves as cofactor.

The protein localises to the cytoplasm. The catalysed reaction is Endonucleolytic cleavage to 5'-phosphomonoester.. Its function is as follows. Endonuclease that specifically degrades the RNA of RNA-DNA hybrids. In Acholeplasma laidlawii (strain PG-8A), this protein is Ribonuclease HII.